We begin with the raw amino-acid sequence, 565 residues long: NAD-dependent malic enzyme (565 aa).

Residue Tyr104 is the Proton donor of the active site. Arg157 contacts NAD(+). The Proton acceptor role is filled by Lys175. The a divalent metal cation site is built by Glu246, Asp247, and Asp270. Positions 270 and 418 each coordinate NAD(+).

The protein belongs to the malic enzymes family. As to quaternary structure, homotetramer. Mg(2+) is required as a cofactor. Requires Mn(2+) as cofactor.

It catalyses the reaction (S)-malate + NAD(+) = pyruvate + CO2 + NADH. It carries out the reaction oxaloacetate + H(+) = pyruvate + CO2. The polypeptide is NAD-dependent malic enzyme (Shigella sonnei (strain Ss046)).